We begin with the raw amino-acid sequence, 120 residues long: Large ribosomal subunit protein uL18 (120 aa).

This sequence belongs to the universal ribosomal protein uL18 family. Part of the 50S ribosomal subunit; part of the 5S rRNA/L5/L18/L25 subcomplex. Contacts the 5S and 23S rRNAs.

This is one of the proteins that bind and probably mediate the attachment of the 5S RNA into the large ribosomal subunit, where it forms part of the central protuberance. This is Large ribosomal subunit protein uL18 from Picosynechococcus sp. (strain ATCC 27264 / PCC 7002 / PR-6) (Agmenellum quadruplicatum).